Reading from the N-terminus, the 3003-residue chain is MAX gene-associated protein (3003 aa).

Residues K4 and K178 each participate in a glycyl lysine isopeptide (Lys-Gly) (interchain with G-Cter in SUMO2) cross-link. A DNA-binding region (T-box) is located at residues M84–D260. Residues R259–S277 show a composition bias toward basic and acidic residues. The interval R259 to H290 is disordered. Residues D278–P288 are compositionally biased toward polar residues. Glycyl lysine isopeptide (Lys-Gly) (interchain with G-Cter in SUMO2) cross-links involve residues K323, K329, K348, K431, K458, K463, and K480. Position 531 is a phosphoserine (S531). The interval I553–F647 is disordered. K567 participates in a covalent cross-link: Glycyl lysine isopeptide (Lys-Gly) (interchain with G-Cter in SUMO2). A compositionally biased stretch (polar residues) spans K595 to T607. Phosphoserine is present on S604. Residues K610, K651, K782, K788, K814, and K823 each participate in a glycyl lysine isopeptide (Lys-Gly) (interchain with G-Cter in SUMO2) cross-link. Basic residues predominate over residues K610–K621. At S848 the chain carries Phosphoserine. Positions K871–K913 are enriched in polar residues. 2 disordered regions span residues K871–N946 and L967–K987. S921 carries the phosphoserine modification. A Glycyl lysine isopeptide (Lys-Gly) (interchain with G-Cter in SUMO2) cross-link involves residue K925. A compositionally biased stretch (polar residues) spans K937–N946. Low complexity predominate over residues Q969–Q978. Residues K987 and K1088 each participate in a glycyl lysine isopeptide (Lys-Gly) (interchain with G-Cter in SUMO2) cross-link. The interval L1111–E1130 is disordered. The segment covering E1113 to R1122 has biased composition (basic and acidic residues). Residues K1136, K1158, K1194, and K1202 each participate in a glycyl lysine isopeptide (Lys-Gly) (interchain with G-Cter in SUMO2) cross-link. Disordered stretches follow at residues Q1186–I1215, Q1246–L1277, S1297–G1323, and R1376–P1424. Composition is skewed to low complexity over residues Q1248–P1269 and K1303–S1315. A phosphoserine mark is found at S1423 and S1450. Glycyl lysine isopeptide (Lys-Gly) (interchain with G-Cter in SUMO2) cross-links involve residues K1454 and K1495. Disordered stretches follow at residues A1476–K1508, P1722–V1746, I1856–T1885, I1920–D1954, S1964–L1983, and T1988–K2038. 3 stretches are compositionally biased toward polar residues: residues L1488 to G1507, P1735 to V1746, and P1859 to G1880. Glycyl lysine isopeptide (Lys-Gly) (interchain with G-Cter in SUMO2) cross-links involve residues K1937 and K1944. Over residues S1964–S1976 the composition is skewed to polar residues. Residues K2060 and K2084 each participate in a glycyl lysine isopeptide (Lys-Gly) (interchain with G-Cter in SUMO2) cross-link. The tract at residues L2087–S2110 is disordered. Residues S2088–A2101 show a composition bias toward polar residues. Glycyl lysine isopeptide (Lys-Gly) (interchain with G-Cter in SUMO2) cross-links involve residues K2104, K2152, and K2179. The residue at position 2206 (R2206) is an Omega-N-methylarginine. A disordered region spans residues G2207–D2255. Residues E2220 to R2232 are compositionally biased toward basic and acidic residues. A Glycyl lysine isopeptide (Lys-Gly) (interchain with G-Cter in SUMO2) cross-link involves residue K2225. Over residues D2242–D2255 the composition is skewed to acidic residues. Glycyl lysine isopeptide (Lys-Gly) (interchain with G-Cter in SUMO2) cross-links involve residues K2317, K2352, K2396, and K2471. In terms of domain architecture, bHLH spans Y2362–L2413. S2480 carries the post-translational modification Phosphoserine. Positions K2515–N2534 are disordered. The segment covering T2520 to N2534 has biased composition (polar residues). Glycyl lysine isopeptide (Lys-Gly) (interchain with G-Cter in SUMO2) cross-links involve residues K2568 and K2618. The span at S2629–K2651 shows a compositional bias: basic and acidic residues. A disordered region spans residues S2629–G2654. K2724 participates in a covalent cross-link: Glycyl lysine isopeptide (Lys-Gly) (interchain with G-Cter in SUMO2). A phosphoserine mark is found at S2849 and S2860. Residues L2877–T2917 form a disordered region. K2979 participates in a covalent cross-link: Glycyl lysine isopeptide (Lys-Gly) (interchain with G-Cter in SUMO2).

As to quaternary structure, component of some MLL1/MLL complex, at least composed of the core components KMT2A/MLL1, ASH2L, HCFC1/HCF1, WDR5 and RBBP5, as well as the facultative components BACC1, CHD8, E2F6, HSP70, INO80C, KANSL1, LAS1L, MAX, MCRS1, MGA, MYST1/MOF, PELP1, PHF20, PRP31, RING2, RUVB1/TIP49A, RUVB2/TIP49B, SENP3, TAF1, TAF4, TAF6, TAF7, TAF9 and TEX10. Interacts with ZMYND11. Interacts with MAX. Requires heterodimerization with MAX for E-box binding. In terms of tissue distribution, highly expressed in germ cells and granulosa cells.

It localises to the nucleus. Functions as a dual-specificity transcription factor, regulating the expression of both MAX-network and T-box family target genes. Functions as a repressor or an activator. Binds to 5'-AATTTCACACCTAGGTGTGAAATT-3' core sequence and seems to regulate MYC-MAX target genes. Suppresses transcriptional activation by MYC and inhibits MYC-dependent cell transformation. Function activated by heterodimerization with MAX. This heterodimerization serves the dual function of both generating an E-box-binding heterodimer and simultaneously blocking interaction of a corepressor. The chain is MAX gene-associated protein from Mus musculus (Mouse).